The primary structure comprises 680 residues: UvrABC system protein C (680 aa).

Positions 66-144 (NSPGVYRMFN…IKRLRPRFNV (79 aa)) constitute a GIY-YIG domain. The UVR domain maps to 254 to 289 (QKVKSHMAEAMNQAAEDLDFERAAIYRDRLAALSHV).

The protein belongs to the UvrC family. Interacts with UvrB in an incision complex.

Its subcellular location is the cytoplasm. Functionally, the UvrABC repair system catalyzes the recognition and processing of DNA lesions. UvrC both incises the 5' and 3' sides of the lesion. The N-terminal half is responsible for the 3' incision and the C-terminal half is responsible for the 5' incision. The polypeptide is UvrABC system protein C (Rhizobium johnstonii (strain DSM 114642 / LMG 32736 / 3841) (Rhizobium leguminosarum bv. viciae)).